The primary structure comprises 616 residues: uncharacterized protein (616 aa).

Belongs to the UbiD family.

This is an uncharacterized protein from Helicobacter pylori (strain J99 / ATCC 700824) (Campylobacter pylori J99).